The following is a 3291-amino-acid chain: Protocadherin-16 (3291 aa).

Positions 1–35 are cleaved as a signal peptide; that stretch reads MQKELSVALSCPGMKSLRTLLPLLVLLGATVPGSW. Topologically, residues 36–2933 are extracellular; that stretch reads GQAGSLDLQI…PDLNLLLVGA (2898 aa). Cadherin domains lie at 37–137, 138–249, 250–356, 369–466, 476–572, 573–679, 680–784, 785–888, 889–994, 995–1105, 1100–1205, 1218–1317, 1326–1429, 1430–1539, 1539–1642, 1643–1744, 1745–1848, 1849–1953, 1976–2061, 2062–2164, 2165–2270, 2270–2369, 2370–2475, 2476–2595, 2596–2699, 2700–2806, and 2807–2926; these read QAGS…APAF, PQAR…APAF, NQSR…QPSM, VSEA…APAF, LPEV…EPQF, QRTF…PPQF, YPRE…PPIF, EQLQ…SPAF, PAPE…APRF, DSPT…EPTF, SEEP…SPTF, IQVP…SPDL, VPVV…APTF, ARDP…APVF, FASP…APAF, PQQE…TPTF, GNTH…APVF, PVPS…APAF, LATL…GPRF, PRTS…APRF, LRPH…RPTI, IPQP…VPTF, SQSL…APSF, TLPH…PPVF, TRAS…GPAF, PLSL…DPVF, and LAPS…APDL. A glycan (N-linked (GlcNAc...) asparagine) is linked at N396. N-linked (GlcNAc...) asparagine glycosylation is present at N2354. Residues 2867–2886 are disordered; it reads SRAPGSGTTTSGGGGRTRRE. A helical transmembrane segment spans residues 2934–2954; sequence VAASLGVVVVLALAALVLGLV. Residues 2955–3291 are Cytoplasmic-facing; the sequence is RARSRKAEAA…EPPDDTELRI (337 aa). Positions 2978–3033 are disordered; that stretch reads SLQKLGREPPSPPPSEHLYHQTLPSYGGPGAGGPYPRGGSLDPSHSSGRGSAEAAE. Over residues 3004–3013 the composition is skewed to gly residues; sequence GGPGAGGPYP. S3048 bears the Phosphoserine mark. Disordered stretches follow at residues 3051–3081 and 3226–3291; these read SSLAARGPDSGIQQDADGLSDTSCEPPAPDT and ASHR…ELRI. Low complexity predominate over residues 3237–3259; sequence SLSSAAMSPSFSPSLSPLAARSP. The span at 3270–3279 shows a compositional bias: polar residues; sequence PSASALSTES.

In terms of assembly, heterophilic interaction with FAT4; this interaction affects their respective protein levels. In terms of tissue distribution, expressed in the epicardium and atrioventricular sulcus (at protein level).

It localises to the cell membrane. In terms of biological role, calcium-dependent cell-adhesion protein. Mediates functions in neuroprogenitor cell proliferation and differentiation. In the heart, has a critical role for proper morphogenesis of the mitral valve, acting in the regulation of cell migration involved in valve formation. The sequence is that of Protocadherin-16 (Dchs1) from Mus musculus (Mouse).